The primary structure comprises 73 residues: Large ribosomal subunit protein bL31 (73 aa).

C16, C18, C36, and C39 together coordinate Zn(2+).

The protein belongs to the bacterial ribosomal protein bL31 family. Type A subfamily. In terms of assembly, part of the 50S ribosomal subunit. The cofactor is Zn(2+).

In terms of biological role, binds the 23S rRNA. This chain is Large ribosomal subunit protein bL31, found in Citrifermentans bemidjiense (strain ATCC BAA-1014 / DSM 16622 / JCM 12645 / Bem) (Geobacter bemidjiensis).